The primary structure comprises 306 residues: Palmitoyl-protein thioesterase 1 (306 aa).

The N-terminal stretch at 1–27 (MASSCSRRLLAAALLPWCCAAWALGHL) is a signal peptide. 3 disulfide bridges follow: cysteine 45/cysteine 46, cysteine 96/cysteine 128, and cysteine 152/cysteine 160. Residue serine 115 is part of the active site. Asparagine 197, asparagine 212, and asparagine 232 each carry an N-linked (GlcNAc...) asparagine glycan. Residues aspartate 233 and histidine 289 contribute to the active site.

The protein belongs to the palmitoyl-protein thioesterase family. Interacts with CLN5, ATP5F1A and ATP5F1B. In terms of processing, glycosylated. As to expression, highest level in testis and kidney, lower in heart, brain and lung and lowest in skeletal muscle.

Its subcellular location is the lysosome. It is found in the secreted. It localises to the golgi apparatus. The protein localises to the endoplasmic reticulum. It catalyses the reaction S-hexadecanoyl-L-cysteinyl-[protein] + H2O = L-cysteinyl-[protein] + hexadecanoate + H(+). The catalysed reaction is hexadecanoyl-CoA + H2O = hexadecanoate + CoA + H(+). The enzyme catalyses S-hexadecanoyl-N-acetylcysteamine + H2O = N-acetylcysteamine + hexadecanoate + H(+). It carries out the reaction S-hexadecanoyl-N-acetylcysteine methyl ester + H2O = N-acetylcysteine methyl ester + hexadecanoate + H(+). Has thioesterase activity against fatty acid thioesters with 14 -18 carbons, including palmitoyl-CoA, S-palmitoyl-N-acetylcysteamine, and palmitoylated proteins. In contrast to PPT2, PPT1 can hydrolyze palmitoylated proteins and palmitoylcysteine. This chain is Palmitoyl-protein thioesterase 1 (Ppt1), found in Mus musculus (Mouse).